The following is a 204-amino-acid chain: uncharacterized protein (204 aa).

The segment at 77–111 (APHGSRIPGRCRRSPRCSRRPGGSRLRGGTWTPRL) is disordered. The span at 85–95 (GRCRRSPRCSR) shows a compositional bias: basic residues. The span at 96–105 (RPGGSRLRGG) shows a compositional bias: low complexity.

This is an uncharacterized protein from Homo sapiens (Human).